Consider the following 222-residue polypeptide: Superoxide dismutase [Mn], mitochondrial (222 aa).

Residues 1–24 (MLCRAACSTSRKLVPALGSLGSRQ) constitute a mitochondrion transit peptide. Residue H50 participates in Mn(2+) binding. Y58 carries the post-translational modification 3'-nitrotyrosine. N6-acetyllysine; alternate is present on residues K68 and K75. N6-succinyllysine; alternate is present on residues K68 and K75. Residue H98 coordinates Mn(2+). Position 114 is an N6-acetyllysine (K114). N6-acetyllysine; alternate occurs at positions 122 and 130. K122 and K130 each carry N6-succinyllysine; alternate. Mn(2+) is bound by residues D183 and H187. At K202 the chain carries N6-acetyllysine.

The protein belongs to the iron/manganese superoxide dismutase family. As to quaternary structure, homotetramer. Requires Mn(2+) as cofactor. In terms of processing, nitrated under oxidative stress. Nitration coupled with oxidation inhibits the catalytic activity. Post-translationally, acetylation at Lys-122 decreases enzymatic activity. Deacetylated by SIRT3 upon exposure to ionizing radiations or after long fasting. Polyubiquitinated; leading to proteasomal degradation. Deubiquitinated by USP36 which increases protein stability.

The protein resides in the mitochondrion matrix. The catalysed reaction is 2 superoxide + 2 H(+) = H2O2 + O2. Functionally, destroys superoxide anion radicals which are normally produced within the cells and which are toxic to biological systems. In Equus caballus (Horse), this protein is Superoxide dismutase [Mn], mitochondrial (SOD2).